A 154-amino-acid polypeptide reads, in one-letter code: 6,7-dimethyl-8-ribityllumazine synthase (154 aa).

Residues F15, 47–49, and 71–73 contribute to the 5-amino-6-(D-ribitylamino)uracil site; these read TFD and AVI. 76–77 is a (2S)-2-hydroxy-3-oxobutyl phosphate binding site; that stretch reads ET. H79 functions as the Proton donor in the catalytic mechanism. A 5-amino-6-(D-ribitylamino)uracil-binding site is contributed by L104. R119 contacts (2S)-2-hydroxy-3-oxobutyl phosphate.

It belongs to the DMRL synthase family.

It catalyses the reaction (2S)-2-hydroxy-3-oxobutyl phosphate + 5-amino-6-(D-ribitylamino)uracil = 6,7-dimethyl-8-(1-D-ribityl)lumazine + phosphate + 2 H2O + H(+). Its pathway is cofactor biosynthesis; riboflavin biosynthesis; riboflavin from 2-hydroxy-3-oxobutyl phosphate and 5-amino-6-(D-ribitylamino)uracil: step 1/2. Functionally, catalyzes the formation of 6,7-dimethyl-8-ribityllumazine by condensation of 5-amino-6-(D-ribitylamino)uracil with 3,4-dihydroxy-2-butanone 4-phosphate. This is the penultimate step in the biosynthesis of riboflavin. In Saccharolobus islandicus (strain M.16.27) (Sulfolobus islandicus), this protein is 6,7-dimethyl-8-ribityllumazine synthase.